The primary structure comprises 129 residues: Cytochrome c oxidase subunit 5B, mitochondrial (129 aa).

A mitochondrion-targeting transit peptide spans 1 to 31 (MASRLLRGVGALAAQALRAHGPRGVAATRSM). 2 positions are modified to N6-acetyllysine: Lys68 and Lys86. Zn(2+) is bound by residues Cys91, Cys93, Cys113, and Cys116. An N6-acetyllysine modification is found at Lys121.

Belongs to the cytochrome c oxidase subunit 5B family. As to quaternary structure, component of the cytochrome c oxidase (complex IV, CIV), a multisubunit enzyme composed of 14 subunits. The complex is composed of a catalytic core of 3 subunits MT-CO1, MT-CO2 and MT-CO3, encoded in the mitochondrial DNA, and 11 supernumerary subunits COX4I, COX5A, COX5B, COX6A, COX6B, COX6C, COX7A, COX7B, COX7C, COX8 and NDUFA4, which are encoded in the nuclear genome. The complex exists as a monomer or a dimer and forms supercomplexes (SCs) in the inner mitochondrial membrane with NADH-ubiquinone oxidoreductase (complex I, CI) and ubiquinol-cytochrome c oxidoreductase (cytochrome b-c1 complex, complex III, CIII), resulting in different assemblies (supercomplex SCI(1)III(2)IV(1) and megacomplex MCI(2)III(2)IV(2)).

It is found in the mitochondrion inner membrane. The protein operates within energy metabolism; oxidative phosphorylation. Component of the cytochrome c oxidase, the last enzyme in the mitochondrial electron transport chain which drives oxidative phosphorylation. The respiratory chain contains 3 multisubunit complexes succinate dehydrogenase (complex II, CII), ubiquinol-cytochrome c oxidoreductase (cytochrome b-c1 complex, complex III, CIII) and cytochrome c oxidase (complex IV, CIV), that cooperate to transfer electrons derived from NADH and succinate to molecular oxygen, creating an electrochemical gradient over the inner membrane that drives transmembrane transport and the ATP synthase. Cytochrome c oxidase is the component of the respiratory chain that catalyzes the reduction of oxygen to water. Electrons originating from reduced cytochrome c in the intermembrane space (IMS) are transferred via the dinuclear copper A center (CU(A)) of subunit 2 and heme A of subunit 1 to the active site in subunit 1, a binuclear center (BNC) formed by heme A3 and copper B (CU(B)). The BNC reduces molecular oxygen to 2 water molecules using 4 electrons from cytochrome c in the IMS and 4 protons from the mitochondrial matrix. This chain is Cytochrome c oxidase subunit 5B, mitochondrial (Cox5b), found in Rattus norvegicus (Rat).